The sequence spans 309 residues: Porphobilinogen deaminase (309 aa).

At Cys-244 the chain carries S-(dipyrrolylmethanemethyl)cysteine.

Belongs to the HMBS family. As to quaternary structure, monomer. Dipyrromethane serves as cofactor.

It catalyses the reaction 4 porphobilinogen + H2O = hydroxymethylbilane + 4 NH4(+). It participates in porphyrin-containing compound metabolism; protoporphyrin-IX biosynthesis; coproporphyrinogen-III from 5-aminolevulinate: step 2/4. In terms of biological role, tetrapolymerization of the monopyrrole PBG into the hydroxymethylbilane pre-uroporphyrinogen in several discrete steps. The sequence is that of Porphobilinogen deaminase from Listeria monocytogenes serotype 4b (strain CLIP80459).